Consider the following 3462-residue polypeptide: DNA-directed RNA polymerase subunit beta'' (3462 aa).

Zn(2+)-binding residues include Cys-263, Cys-335, Cys-342, and Cys-345. An insert-1 region spans residues 541–1085; sequence KIDDQELSSV…PNKIFSSNLF (545 aa). Residues 1528-1585 are insert-2; the sequence is PQSANERKQILKKARQKLRLFPLNLNEKKNRFSSVTLDLLRDQTTLHKMQSCGEAESG. The interval 1602-1699 is insert-3; it reads KKITEIFTFC…FSKQMGNRLL (98 aa). Positions 1938–2168 are insert-4; sequence LKNKMNQSFS…SQASWILETN (231 aa). The insert-5 stretch occupies residues 2320-2870; the sequence is NLVSGKLNFL…KKKIAKEGAF (551 aa). Positions 2972-3196 are insert-6; the sequence is SKSQRGWFHN…IGQLLRYGKE (225 aa).

The protein belongs to the RNA polymerase beta' chain family. RpoC2 subfamily. As to quaternary structure, in plastids the minimal PEP RNA polymerase catalytic core is composed of four subunits: alpha, beta, beta', and beta''. When a (nuclear-encoded) sigma factor is associated with the core the holoenzyme is formed, which can initiate transcription. It depends on Zn(2+) as a cofactor.

It is found in the plastid. Its subcellular location is the chloroplast. The enzyme catalyses RNA(n) + a ribonucleoside 5'-triphosphate = RNA(n+1) + diphosphate. Functionally, DNA-dependent RNA polymerase catalyzes the transcription of DNA into RNA using the four ribonucleoside triphosphates as substrates. This chain is DNA-directed RNA polymerase subunit beta'', found in Tupiella akineta (Green alga).